A 187-amino-acid chain; its full sequence is 1,6-anhydro-N-acetylmuramyl-L-alanine amidase AmpD (187 aa).

Positions 30–167 (LLVVHNISLP…APERKTDPGP (138 aa)) constitute an N-acetylmuramoyl-L-alanine amidase domain. Residue histidine 34 coordinates Zn(2+). Residue glutamate 116 is the Proton acceptor of the active site. Zn(2+)-binding residues include histidine 154 and aspartate 164.

Belongs to the N-acetylmuramoyl-L-alanine amidase 2 family. The cofactor is Zn(2+).

It is found in the cytoplasm. The enzyme catalyses Hydrolyzes the link between N-acetylmuramoyl residues and L-amino acid residues in certain cell-wall glycopeptides.. With respect to regulation, amidase activity is inhibited by metal chelators such as EDTA, dipicolinic acid or 1,10-phenanthroline. In terms of biological role, involved in cell wall peptidoglycan recycling. Specifically cleaves the amide bond between the lactyl group of N-acetylmuramic acid and the alpha-amino group of the L-alanine in degradation products containing an anhydro N-acetylmuramyl moiety. Is also involved in beta-lactamase induction. This is 1,6-anhydro-N-acetylmuramyl-L-alanine amidase AmpD from Citrobacter freundii.